The primary structure comprises 64 residues: uncharacterized protein (64 aa).

A helical transmembrane segment spans residues 41 to 61 (VFLALKVLGIMVLFYLLDAII).

It localises to the membrane. This is an uncharacterized protein from Acheta domesticus (House cricket).